A 417-amino-acid polypeptide reads, in one-letter code: Phosphoglycerate kinase (417 aa).

V23, D24, F25, N26, Q38, R39, S62, H63, G65, R66, L122, R123, H170, and R171 together coordinate (2R)-3-phosphoglycerate. G214 contributes to the ADP binding site. G214 contributes to the CDP binding site. The AMP site is built by A215 and K216. A215 is an ATP binding site. Mg(2+) is bound at residue A215. Residue D219 coordinates CDP. D219 provides a ligand contact to Mg(2+). Residue K220 coordinates AMP. K220 serves as a coordination point for ATP. Residue G238 participates in ADP binding. G238 contacts CDP. AMP contacts are provided by G239 and G313. G239 and G313 together coordinate ATP. The CDP site is built by G338, V340, and F343. ADP is bound at residue F343. AMP is bound at residue E344. The ATP site is built by E344, D375, and T376. D375 is a binding site for Mg(2+).

Belongs to the phosphoglycerate kinase family. Monomer. Requires Mg(2+) as cofactor.

It is found in the cytoplasm. It carries out the reaction (2R)-3-phosphoglycerate + ATP = (2R)-3-phospho-glyceroyl phosphate + ADP. It participates in carbohydrate degradation; glycolysis; pyruvate from D-glyceraldehyde 3-phosphate: step 2/5. Catalyzes one of the two ATP producing reactions in the glycolytic pathway via the reversible conversion of 1,3-diphosphoglycerate to 3-phosphoglycerate. In addition to its role as a glycolytic enzyme, it seems that PGK-1 acts as a polymerase alpha cofactor protein (primer recognition protein). May play a role in sperm motility. This chain is Phosphoglycerate kinase (PGK), found in Gallus gallus (Chicken).